The chain runs to 605 residues: ABC transporter E family member 2 (605 aa).

In terms of domain architecture, 4Fe-4S ferredoxin-type spans K46 to L75. ABC transporter domains lie at I70–G315 and I344–L568. Residues G110–S117 and G381–T388 each bind ATP.

This sequence belongs to the ABC transporter superfamily. ABCE family. As to expression, expressed in roots, stems, leaves, flowers and siliques.

It localises to the membrane. The sequence is that of ABC transporter E family member 2 (ABCE2) from Arabidopsis thaliana (Mouse-ear cress).